The following is an 812-amino-acid chain: Lon protease (812 aa).

Positions 12–205 (LPMLPLRGVL…YLCELLAKEM (194 aa)) constitute a Lon N-terminal domain. 357-364 (GPPGVGKT) is a binding site for ATP. The 182-residue stretch at 593–774 (ENQVGVATGL…DEVLEETLLK (182 aa)) folds into the Lon proteolytic domain. Active-site residues include Ser-680 and Lys-723.

It belongs to the peptidase S16 family. Homohexamer. Organized in a ring with a central cavity.

Its subcellular location is the cytoplasm. The enzyme catalyses Hydrolysis of proteins in presence of ATP.. Its function is as follows. ATP-dependent serine protease that mediates the selective degradation of mutant and abnormal proteins as well as certain short-lived regulatory proteins. Required for cellular homeostasis and for survival from DNA damage and developmental changes induced by stress. Degrades polypeptides processively to yield small peptide fragments that are 5 to 10 amino acids long. Binds to DNA in a double-stranded, site-specific manner. The chain is Lon protease from Syntrophomonas wolfei subsp. wolfei (strain DSM 2245B / Goettingen).